The chain runs to 239 residues: Large ribosomal subunit protein uL2 (239 aa).

Belongs to the universal ribosomal protein uL2 family.

Its subcellular location is the cytoplasm. This Encephalitozoon cuniculi (strain GB-M1) (Microsporidian parasite) protein is Large ribosomal subunit protein uL2 (RPL8).